The sequence spans 346 residues: tRNA N6-adenosine threonylcarbamoyltransferase (346 aa).

Positions 111 and 115 each coordinate Fe cation. Residues 134-138 (LVSGG), Asp167, Gly180, and Asn279 each bind substrate. Asp307 contacts Fe cation.

It belongs to the KAE1 / TsaD family. The cofactor is Fe(2+).

Its subcellular location is the cytoplasm. The enzyme catalyses L-threonylcarbamoyladenylate + adenosine(37) in tRNA = N(6)-L-threonylcarbamoyladenosine(37) in tRNA + AMP + H(+). Its function is as follows. Required for the formation of a threonylcarbamoyl group on adenosine at position 37 (t(6)A37) in tRNAs that read codons beginning with adenine. Is involved in the transfer of the threonylcarbamoyl moiety of threonylcarbamoyl-AMP (TC-AMP) to the N6 group of A37, together with TsaE and TsaB. TsaD likely plays a direct catalytic role in this reaction. The sequence is that of tRNA N6-adenosine threonylcarbamoyltransferase from Burkholderia ambifaria (strain ATCC BAA-244 / DSM 16087 / CCUG 44356 / LMG 19182 / AMMD) (Burkholderia cepacia (strain AMMD)).